The chain runs to 288 residues: NAD(P)H quinone oxidoreductase YCP4 (288 aa).

A Flavodoxin-like domain is found at 3–192 (IAIIQYSTYG…EIAEKQGEAF (190 aa)). FMN-binding positions include 9 to 13 (STYGH) and 110 to 164 (VFVS…SPYG). The disordered stretch occupies residues 202 to 288 (GSKKTNTTTT…KSSCSKCIIM (87 aa)). Residues 205–254 (KTNTTTTSKSAATSDAAGTTSGTAAGTSAATGAATGTSAPKESTKEASSS) are compositionally biased toward low complexity. Over residues 261 to 288 (NGTATRTQQSTKAPETAEKSSCSKCIIM) the composition is skewed to polar residues.

This sequence belongs to the WrbA family. The cofactor is FMN.

The protein localises to the cell membrane. It carries out the reaction a quinone + NADH + H(+) = a quinol + NAD(+). It catalyses the reaction a quinone + NADPH + H(+) = a quinol + NADP(+). Flavodoxin-like protein (FLP) that plays a role in cell wall integrity, oxidative stress protection and virulence. FLPs act as NAD(P)H quinone oxidoreductases. Reduces ubiquinone (coenzyme Q), enabling it to serve as an antioxidant in the membrane. The protein is NAD(P)H quinone oxidoreductase YCP4 of Candida albicans (strain SC5314 / ATCC MYA-2876) (Yeast).